A 105-amino-acid polypeptide reads, in one-letter code: DNA-binding protein HU (105 aa).

Belongs to the bacterial histone-like protein family.

Histone-like DNA-binding protein which is capable of wrapping DNA to stabilize it, and thus to prevent its denaturation under extreme environmental conditions. In Treponema pallidum (strain Nichols), this protein is DNA-binding protein HU (hup).